The following is a 482-amino-acid chain: tRNA sulfurtransferase (482 aa).

The region spanning 61–165 (PVIADALTRI…NDKLMLVKAR (105 aa)) is the THUMP domain. ATP-binding positions include 183–184 (LI), Lys-265, Gly-287, and Gln-296. Cys-344 and Cys-456 are oxidised to a cystine. The Rhodanese domain occupies 404–482 (FDADQVILDI…GFTNVKVYRP (79 aa)). Cys-456 functions as the Cysteine persulfide intermediate in the catalytic mechanism.

The protein belongs to the ThiI family.

The protein localises to the cytoplasm. The catalysed reaction is [ThiI sulfur-carrier protein]-S-sulfanyl-L-cysteine + a uridine in tRNA + 2 reduced [2Fe-2S]-[ferredoxin] + ATP + H(+) = [ThiI sulfur-carrier protein]-L-cysteine + a 4-thiouridine in tRNA + 2 oxidized [2Fe-2S]-[ferredoxin] + AMP + diphosphate. It catalyses the reaction [ThiS sulfur-carrier protein]-C-terminal Gly-Gly-AMP + S-sulfanyl-L-cysteinyl-[cysteine desulfurase] + AH2 = [ThiS sulfur-carrier protein]-C-terminal-Gly-aminoethanethioate + L-cysteinyl-[cysteine desulfurase] + A + AMP + 2 H(+). Its pathway is cofactor biosynthesis; thiamine diphosphate biosynthesis. In terms of biological role, catalyzes the ATP-dependent transfer of a sulfur to tRNA to produce 4-thiouridine in position 8 of tRNAs, which functions as a near-UV photosensor. Also catalyzes the transfer of sulfur to the sulfur carrier protein ThiS, forming ThiS-thiocarboxylate. This is a step in the synthesis of thiazole, in the thiamine biosynthesis pathway. The sulfur is donated as persulfide by IscS. The sequence is that of tRNA sulfurtransferase from Serratia proteamaculans (strain 568).